A 264-amino-acid chain; its full sequence is Glutamate racemase (264 aa).

Substrate contacts are provided by residues 10 to 11 (DS) and 42 to 43 (YG). Catalysis depends on Cys73, which acts as the Proton donor/acceptor. Residue 74–75 (NT) participates in substrate binding. Catalysis depends on Cys183, which acts as the Proton donor/acceptor. Substrate is bound at residue 184-185 (TH).

This sequence belongs to the aspartate/glutamate racemases family.

The catalysed reaction is L-glutamate = D-glutamate. It functions in the pathway cell wall biogenesis; peptidoglycan biosynthesis. In terms of biological role, provides the (R)-glutamate required for cell wall biosynthesis. The chain is Glutamate racemase from Streptococcus pyogenes serotype M4 (strain MGAS10750).